Reading from the N-terminus, the 494-residue chain is UPF0371 protein spyM18_1356 (494 aa).

It belongs to the UPF0371 family.

This is UPF0371 protein spyM18_1356 from Streptococcus pyogenes serotype M18 (strain MGAS8232).